The sequence spans 142 residues: Large ribosomal subunit protein uL13 (142 aa).

It belongs to the universal ribosomal protein uL13 family. As to quaternary structure, part of the 50S ribosomal subunit.

In terms of biological role, this protein is one of the early assembly proteins of the 50S ribosomal subunit, although it is not seen to bind rRNA by itself. It is important during the early stages of 50S assembly. The sequence is that of Large ribosomal subunit protein uL13 from Ralstonia nicotianae (strain ATCC BAA-1114 / GMI1000) (Ralstonia solanacearum).